Here is a 28-residue protein sequence, read N- to C-terminus: Kappa-stichotoxin-Shd1a/kappa-stichotoxin-Shd1b (28 aa).

Proline 6 carries the post-translational modification 4-hydroxyproline; in form SHTX-1 (Shd1a). Cystine bridges form between cysteine 7-cysteine 19 and cysteine 10-cysteine 25.

The protein belongs to the sea anemone BBH family. Post-translationally, occurs in 2 forms which differ in the post-translational modification of Pro-6. In form SHTX-1 (Shd1a) Pro-6 is a hydroxyproline while in form SHTX-2 (Shd1b) Pro-6 is unmodified.

Its subcellular location is the secreted. The protein resides in the nematocyst. Functionally, kappa-stichotoxin-Shd1a: inhibits voltage-gated potassium channels (Kv). Kappa-stichotoxin-Shd1b: inhibits voltage-gated potassium channels (Kv). This toxin inhibits the binding of 125I-alpha-dendrotoxin to synaptosomal membranes (IC(50)=270 nM). The protein is Kappa-stichotoxin-Shd1a/kappa-stichotoxin-Shd1b of Stichodactyla haddoni (Saddle carpet anemone).